The chain runs to 496 residues: Probable malate:quinone oxidoreductase (496 aa).

The protein belongs to the MQO family. It depends on FAD as a cofactor.

The catalysed reaction is (S)-malate + a quinone = a quinol + oxaloacetate. It functions in the pathway carbohydrate metabolism; tricarboxylic acid cycle; oxaloacetate from (S)-malate (quinone route): step 1/1. In Flavobacterium psychrophilum (strain ATCC 49511 / DSM 21280 / CIP 103535 / JIP02/86), this protein is Probable malate:quinone oxidoreductase.